We begin with the raw amino-acid sequence, 258 residues long: Malonyl-[acyl-carrier protein] O-methyltransferase (258 aa).

The protein belongs to the methyltransferase superfamily.

The catalysed reaction is malonyl-[ACP] + S-adenosyl-L-methionine = malonyl-[ACP] methyl ester + S-adenosyl-L-homocysteine. Its pathway is cofactor biosynthesis; biotin biosynthesis. In terms of biological role, converts the free carboxyl group of a malonyl-thioester to its methyl ester by transfer of a methyl group from S-adenosyl-L-methionine (SAM). It allows to synthesize pimeloyl-ACP via the fatty acid synthetic pathway. This chain is Malonyl-[acyl-carrier protein] O-methyltransferase, found in Hamiltonella defensa subsp. Acyrthosiphon pisum (strain 5AT).